The chain runs to 196 residues: Peroxynitrite isomerase (196 aa).

Residues methionine 1–arginine 29 are disordered. Residues leucine 7–proline 19 show a composition bias toward pro residues. The short motif at glycine 46 to glycine 52 is the GXWXGXG element. Histidine 186 contributes to the heme b binding site.

The protein belongs to the nitrobindin family. As to quaternary structure, homodimer. Requires heme b as cofactor.

The enzyme catalyses peroxynitrite = nitrate. Its pathway is nitrogen metabolism. Heme-binding protein able to scavenge peroxynitrite and to protect free L-tyrosine against peroxynitrite-mediated nitration, by acting as a peroxynitrite isomerase that converts peroxynitrite to nitrate. Therefore, this protein likely plays a role in peroxynitrite sensing and in the detoxification of reactive nitrogen and oxygen species (RNS and ROS, respectively). Is able to bind nitric oxide (NO) in vitro, but may act as a sensor of peroxynitrite levels in vivo. The polypeptide is Peroxynitrite isomerase (Salinispora arenicola (strain CNS-205)).